Here is a 620-residue protein sequence, read N- to C-terminus: Chaperone protein HscA homolog (620 aa).

It belongs to the heat shock protein 70 family.

Its function is as follows. Chaperone involved in the maturation of iron-sulfur cluster-containing proteins. Has a low intrinsic ATPase activity which is markedly stimulated by HscB. The protein is Chaperone protein HscA homolog of Shewanella loihica (strain ATCC BAA-1088 / PV-4).